The following is a 425-amino-acid chain: Histidine--tRNA ligase (425 aa).

This sequence belongs to the class-II aminoacyl-tRNA synthetase family. In terms of assembly, homodimer.

The protein localises to the cytoplasm. The catalysed reaction is tRNA(His) + L-histidine + ATP = L-histidyl-tRNA(His) + AMP + diphosphate + H(+). This Buchnera aphidicola subsp. Baizongia pistaciae (strain Bp) protein is Histidine--tRNA ligase.